The following is a 72-amino-acid chain: DNA-directed RNA polymerase subunit omega (72 aa).

Belongs to the RNA polymerase subunit omega family. As to quaternary structure, the RNAP catalytic core consists of 2 alpha, 1 beta, 1 beta' and 1 omega subunit. When a sigma factor is associated with the core the holoenzyme is formed, which can initiate transcription.

The catalysed reaction is RNA(n) + a ribonucleoside 5'-triphosphate = RNA(n+1) + diphosphate. Its function is as follows. Promotes RNA polymerase assembly. Latches the N- and C-terminal regions of the beta' subunit thereby facilitating its interaction with the beta and alpha subunits. This Lactobacillus johnsonii (strain CNCM I-12250 / La1 / NCC 533) protein is DNA-directed RNA polymerase subunit omega.